The sequence spans 311 residues: GTPase Era (311 aa).

One can recognise an Era-type G domain in the interval 18–185; sequence RSGFVALIGA…AKYLAESVPN (168 aa). Positions 26 to 33 are G1; sequence GAPNAGKS. 26 to 33 lines the GTP pocket; that stretch reads GAPNAGKS. Residues 52–56 are G2; that stretch reads QTTRA. The interval 73–76 is G3; the sequence is DTPG. GTP-binding positions include 73–77 and 135–138; these read DTPGI and NKVD. The interval 135 to 138 is G4; it reads NKVD. A G5 region spans residues 164–166; that stretch reads ISA. The KH type-2 domain occupies 216–293; sequence LHEELPYAST…HLFLFVKVRE (78 aa).

Belongs to the TRAFAC class TrmE-Era-EngA-EngB-Septin-like GTPase superfamily. Era GTPase family. Monomer.

The protein resides in the cytoplasm. It localises to the cell inner membrane. Functionally, an essential GTPase that binds both GDP and GTP, with rapid nucleotide exchange. Plays a role in 16S rRNA processing and 30S ribosomal subunit biogenesis and possibly also in cell cycle regulation and energy metabolism. This Brucella suis biovar 1 (strain 1330) protein is GTPase Era.